The sequence spans 82 residues: Sulfur carrier protein TusA (82 aa).

The active-site Cysteine persulfide intermediate is C19.

The protein belongs to the sulfur carrier protein TusA family. Interacts with IscS.

Its subcellular location is the cytoplasm. The protein operates within tRNA modification. Its function is as follows. Sulfur carrier protein involved in sulfur trafficking in the cell. Part of a sulfur-relay system required for 2-thiolation during synthesis of 2-thiouridine of the modified wobble base 5-methylaminomethyl-2-thiouridine (mnm(5)s(2)U) in tRNA. Interacts with IscS and stimulates its cysteine desulfurase activity. Accepts an activated sulfur from IscS, which is then transferred to TusD, and thus determines the direction of sulfur flow from IscS to 2-thiouridine formation. Also appears to be involved in sulfur transfer for the biosynthesis of molybdopterin. The chain is Sulfur carrier protein TusA from Edwardsiella ictaluri (strain 93-146).